We begin with the raw amino-acid sequence, 204 residues long: Ribosomal RNA small subunit methyltransferase G (204 aa).

S-adenosyl-L-methionine contacts are provided by Gly-73, Phe-78, and Arg-139.

The protein belongs to the methyltransferase superfamily. RNA methyltransferase RsmG family.

Its subcellular location is the cytoplasm. It catalyses the reaction guanosine(527) in 16S rRNA + S-adenosyl-L-methionine = N(7)-methylguanosine(527) in 16S rRNA + S-adenosyl-L-homocysteine. Specifically methylates the N7 position of guanine in position 527 of 16S rRNA. This is Ribosomal RNA small subunit methyltransferase G from Coxiella burnetii (strain CbuG_Q212) (Coxiella burnetii (strain Q212)).